Here is a 371-residue protein sequence, read N- to C-terminus: Cytochrome b (371 aa).

Helical transmembrane passes span 25–45 (FGSM…FLAV), 69–90 (WMMQ…YIHI), 105–125 (WMSG…GYVL), and 170–190 (FFAL…LHVI). Heme b contacts are provided by histidine 75 and histidine 89. Positions 174 and 188 each coordinate heme b. Histidine 193 contributes to the a ubiquinone binding site. The next 4 membrane-spanning stretches (helical) occupy residues 218-238 (YKDL…VSFF), 280-300 (LGGA…PFTH), 312-332 (LSQL…WAAT), and 339-358 (FIII…ISTP).

This sequence belongs to the cytochrome b family. In terms of assembly, the cytochrome bc1 complex contains 3 respiratory subunits (MT-CYB, CYC1 and UQCRFS1), 2 core proteins (UQCRC1 and UQCRC2) and probably 6 low-molecular weight proteins. Heme b is required as a cofactor.

It localises to the mitochondrion inner membrane. Its function is as follows. Component of the ubiquinol-cytochrome c reductase complex (complex III or cytochrome b-c1 complex) that is part of the mitochondrial respiratory chain. The b-c1 complex mediates electron transfer from ubiquinol to cytochrome c. Contributes to the generation of a proton gradient across the mitochondrial membrane that is then used for ATP synthesis. The protein is Cytochrome b (MT-CYB) of Python sebae (African rock python).